We begin with the raw amino-acid sequence, 558 residues long: Acid-sensing ion channel 4-B (558 aa).

The Cytoplasmic portion of the chain corresponds to 1-71 (MPIEFVCKIK…TSERLGFRQT (71 aa)). The chain crosses the membrane as a helical span at residues 72–92 (LWGLALLVSLGLFLYQATWSA). The Extracellular segment spans residues 93 to 433 (ATYLERPHLA…ETIEQKKAYD (341 aa)). Disulfide bonds link Cys120–Cys204 and Cys182–Cys189. N-linked (GlcNAc...) asparagine glycosylation is found at Asn140, Asn183, Asn188, Asn210, and Asn245. Intrachain disulfides connect Cys298–Cys373, Cys317–Cys369, Cys321–Cys367, Cys330–Cys351, and Cys332–Cys344. Asn374 carries N-linked (GlcNAc...) asparagine glycosylation. A helical transmembrane segment spans residues 434 to 454 (IAGLLGDIGGQMGLFIGASIL). The GAS motif; ion selectivity filter signature appears at 450–452 (GAS). Over 455–558 (TILEILDYIY…QQAVQQDFAC (104 aa)) the chain is Cytoplasmic.

It belongs to the amiloride-sensitive sodium channel (TC 1.A.6) family. ASIC4 subfamily. In terms of assembly, homotrimer. Heterotrimer; with other ASIC proteins producing functional channels. Expressed in central nervous system.

It localises to the cell membrane. The enzyme catalyses Na(+)(in) = Na(+)(out). Does not exhibit measurable stand-alone pH-gated sodium channel activity but may form pH-gated heterotrimeric sodium channels. This chain is Acid-sensing ion channel 4-B, found in Danio rerio (Zebrafish).